The sequence spans 293 residues: Heterogeneous nuclear ribonucleoprotein D-like-A (293 aa).

Residues 1-21 are disordered; it reads MAGFGAAPDFNEGSKINASKN. RRM domains lie at 26–108 and 111–188; these read GKMF…KGKE and KKVF…AAQP. Disordered stretches follow at residues 193–224 and 274–293; these read RQQQ…GWNQ and QSTY…YQPY. The segment covering 202–222 has biased composition (gly residues); the sequence is GGRGAVTGRGGTRGRGRGQGW.

It localises to the nucleus. The protein resides in the cytoplasm. Acts as a transcriptional regulator. Binds DNA and RNA. The chain is Heterogeneous nuclear ribonucleoprotein D-like-A (hnrnpdl-a) from Xenopus laevis (African clawed frog).